A 260-amino-acid chain; its full sequence is GTP cyclohydrolase FolE2 (260 aa).

The protein belongs to the GTP cyclohydrolase IV family.

The enzyme catalyses GTP + H2O = 7,8-dihydroneopterin 3'-triphosphate + formate + H(+). It functions in the pathway cofactor biosynthesis; 7,8-dihydroneopterin triphosphate biosynthesis; 7,8-dihydroneopterin triphosphate from GTP: step 1/1. Converts GTP to 7,8-dihydroneopterin triphosphate. The polypeptide is GTP cyclohydrolase FolE2 (Desulfovibrio desulfuricans (strain ATCC 27774 / DSM 6949 / MB)).